The primary structure comprises 707 residues: Solute carrier family 15 member 1 (707 aa).

The chain crosses the membrane as a helical span at residues 1-21; sequence MGMSKSLSCFGYPLSIFFIVV. Residues 22–53 lie on the Extracellular side of the membrane; it reads NEFCERFSYYGMRALLILYFRNFIGWDDNLST. A glycan (N-linked (GlcNAc...) asparagine) is linked at Asn50. A helical membrane pass occupies residues 54–74; sequence VIYHTFVALCYLTPILGALIA. Topologically, residues 75–82 are cytoplasmic; sequence DAWLGKFK. Residues 83-103 traverse the membrane as a helical segment; it reads TIVWLSIVYTIGQAVTSLSSV. The Extracellular portion of the chain corresponds to 104–118; it reads NELTDNNHDGTPDSL. Residues 119 to 139 traverse the membrane as a helical segment; that stretch reads PVHVAVCMIGLLLIALGTGGI. Over 140 to 161 the chain is Cytoplasmic; it reads KPCVSAFGGDQFEEGQEKQRNR. Residues 162–182 traverse the membrane as a helical segment; sequence FFSIFYLAINAGSLLSTIITP. Over 183-198 the chain is Extracellular; that stretch reads MVRVQQCGIHVKQACY. Residues 199-219 form a helical membrane-spanning segment; it reads PLAFGIPAILMAVSLIVFIIG. At 220-276 the chain is on the cytoplasmic side; it reads SGMYKKFKPQGNILSKVVKCICFAIKNRFRHRSKQFPKRAHWLDWAKEKYDERLIAQ. The chain crosses the membrane as a helical span at residues 277–297; sequence IKMVTRVLFLYIPLPMFWALF. The Extracellular portion of the chain corresponds to 298–327; it reads DQQGSRWTLQATTMSGRIGILEIQPDQMQT. A helical transmembrane segment spans residues 328–348; sequence VNTILIIILVPIMDAVVYPLI. Topologically, residues 349-361 are cytoplasmic; it reads AKCGLNFTSLKKM. Residues 362–382 form a helical membrane-spanning segment; sequence TIGMFLASMAFVAAAILQVEI. Residues 383 to 583 are Extracellular-facing; it reads DKTLPVFPKA…PPNTMNMAWQ (201 aa). The segment at 383 to 583 is extracellular domain (ECD); that stretch reads DKTLPVFPKA…PPNTMNMAWQ (201 aa). N-linked (GlcNAc...) asparagine glycans are attached at residues Asn439, Asn498, and Asn513. A helical transmembrane segment spans residues 584 to 604; that stretch reads IPQYFLITSGEVVFSITGLEF. At 605–618 the chain is on the cytoplasmic side; the sequence is SYSQAPSNMKSVLQ. A helical transmembrane segment spans residues 619–639; the sequence is AGWLLTVAVGNIIVLIVAGAG. Over 640 to 644 the chain is Extracellular; that stretch reads QINKQ. Residues 645–665 form a helical membrane-spanning segment; it reads WAEYILFAALLLVVCVIFAIM. The Cytoplasmic portion of the chain corresponds to 666-707; sequence ARFYTYVNPAEIEAQFEEDEKKKNPEKNDLYPSLAPVSQTQM. A disordered region spans residues 682–707; the sequence is EEDEKKKNPEKNDLYPSLAPVSQTQM. The span at 684–694 shows a compositional bias: basic and acidic residues; it reads DEKKKNPEKND.

It belongs to the major facilitator superfamily. Proton-dependent oligopeptide transporter (POT/PTR) (TC 2.A.17) family. In terms of assembly, interacts (via extracellular domain region) with trypsin. In terms of tissue distribution, intestine, kidney, liver and low in brain.

The protein resides in the apical cell membrane. It catalyses the reaction a dipeptide(out) + H(+)(out) = a dipeptide(in) + H(+)(in). It carries out the reaction an L-amino acid tripeptide(out) + H(+)(out) = an L-amino acid tripeptide(in) + H(+)(in). The catalysed reaction is L-alanyl-L-lysine(out) + H(+)(out) = L-alanyl-L-lysine(in) + H(+)(in). The enzyme catalyses L-alanyl-L-proline(out) + H(+)(out) = L-alanyl-L-proline(in) + H(+)(in). It catalyses the reaction L-alanyl-L-valine(out) + H(+)(out) = L-alanyl-L-valine(in) + H(+)(in). It carries out the reaction carnosine(out) + H(+)(out) = carnosine(in) + H(+)(in). The catalysed reaction is glycyl-L-glutamine(out) + H(+)(out) = glycyl-L-glutamine(in) + H(+)(in). The enzyme catalyses glycyl-L-leucine(out) + H(+)(out) = glycyl-L-leucine(in) + H(+)(in). It catalyses the reaction glycyl-L-proline(out) + H(+)(out) = glycyl-L-proline(in) + H(+)(in). It carries out the reaction glycyl-sarcosine(out) + H(+)(out) = glycyl-sarcosine(in) + H(+)(in). The catalysed reaction is L-leucyl-L-leucine(out) + H(+)(out) = L-leucyl-L-leucine(in) + H(+)(in). The enzyme catalyses L-leucyl-L-proline(out) + H(+)(out) = L-leucyl-L-proline(in) + H(+)(in). It catalyses the reaction L-phenylalanyl-L-leucine(out) + H(+)(out) = L-phenylalanyl-L-leucine(in) + H(+)(in). It carries out the reaction L-phenylalanyl-L-phenylalanine(out) + H(+)(out) = L-phenylalanyl-L-phenylalanine(in) + H(+)(in). The catalysed reaction is L-lysyl-glycine(out) + H(+)(out) = L-lysyl-glycine(in) + H(+)(in). The enzyme catalyses L-tyrosylglycine(out) + H(+)(out) = L-tyrosylglycine(in) + H(+)(in). It catalyses the reaction L-alanyl-L-aspartate(out) + 2 H(+)(out) = L-alanyl-L-aspartate(in) + 2 H(+)(in). It carries out the reaction L-aspartyl-glycine(out) + 2 H(+)(out) = L-aspartyl-glycine(in) + 2 H(+)(in). The catalysed reaction is glycyl-L-aspartate(out) + 2 H(+)(out) = glycyl-L-aspartate(in) + 2 H(+)(in). The enzyme catalyses glycyl-L-glutamate(out) + 2 H(+)(out) = glycyl-L-glutamate(in) + 2 H(+)(in). It catalyses the reaction L-alanyl-L-leucyl-L-alanine(out) + H(+)(out) = L-alanyl-L-leucyl-L-alanine(in) + H(+)(in). It carries out the reaction L-alanyl-L-prolylglycine(out) + H(+)(out) = L-alanyl-L-prolylglycine(in) + H(+)(in). The catalysed reaction is glycylglycyl-L-isoleucine(out) + H(+)(out) = glycylglycyl-L-isoleucine(in) + H(+)(in). The enzyme catalyses glycylglycyl-L-proline(out) + H(+)(out) = glycylglycyl-L-proline(in) + H(+)(in). It catalyses the reaction L-methionyl-L-phenylalanyl-L-methionine(out) + H(+)(out) = L-methionyl-L-phenylalanyl-L-methionine(in) + H(+)(in). It carries out the reaction N-acetyl-D-muramoyl-L-alanyl-D-isoglutamine(out) + 2 H(+)(out) = N-acetyl-D-muramoyl-L-alanyl-D-isoglutamine(in) + 2 H(+)(in). The catalysed reaction is N(alpha)-formyl-L-methionyl-L-leucyl-L-phenylalanine(out) + 2 H(+)(out) = N(alpha)-formyl-L-methionyl-L-leucyl-L-phenylalanine(in) + 2 H(+)(in). Electrogenic proton-coupled amino-acid transporter that transports oligopeptides of 2 to 4 amino acids with a preference for dipeptides. Transports neutral and monovalently charged peptides with a proton to peptide stoichiometry of 1:1 or 2:1. Primarily responsible for the absorption of dietary di- and tripeptides from the small intestinal lumen. Mediates transepithelial transport of muramyl and N-formylated bacterial dipeptides contributing to recognition of pathogenic bacteria by the mucosal immune system. In Oryctolagus cuniculus (Rabbit), this protein is Solute carrier family 15 member 1 (SLC15A1).